The following is a 368-amino-acid chain: DnaJ homolog subfamily C member 25 (368 aa).

The helical transmembrane segment at 25-47 (MQPRLFVLVALSVLLLSGRAGAL) threads the bilayer. One can recognise a J domain in the interval 57-132 (VCYDVLGVSR…ETRKDYDYML (76 aa)). A run of 2 helical transmembrane segments spans residues 158 to 178 (IVIL…WWSS) and 252 to 272 (ILLF…SWYV).

Belongs to the DNAJC25 family.

It is found in the membrane. This Xenopus tropicalis (Western clawed frog) protein is DnaJ homolog subfamily C member 25 (dnajc25).